The following is a 444-amino-acid chain: ATP-dependent 6-phosphofructokinase 2 (444 aa).

Ser55 bears the Phosphoserine mark. Residues Gly86, 149–150 (RG), and 174–177 (GDGT) each bind ATP. Asp175 serves as a coordination point for Mg(2+). Substrate is bound by residues 203–205 (TVD), 248–250 (MGR), Glu304, and 362–365 (YMIR). The active-site Proton acceptor is Asp205.

The protein belongs to the phosphofructokinase type A (PFKA) family. PPi-dependent PFK group II subfamily. Atypical ATP-dependent clade 'X' sub-subfamily. In terms of assembly, homotetramer. Requires Mg(2+) as cofactor. In terms of tissue distribution, mostly expressed in roots and stems.

It is found in the cytoplasm. The enzyme catalyses beta-D-fructose 6-phosphate + ATP = beta-D-fructose 1,6-bisphosphate + ADP + H(+). It participates in carbohydrate degradation; glycolysis; D-glyceraldehyde 3-phosphate and glycerone phosphate from D-glucose: step 3/4. With respect to regulation, allosterically activated by AMP. In terms of biological role, catalyzes the phosphorylation of D-fructose 6-phosphate to fructose 1,6-bisphosphate by ATP, the first committing step of glycolysis. The chain is ATP-dependent 6-phosphofructokinase 2 from Arabidopsis thaliana (Mouse-ear cress).